A 303-amino-acid polypeptide reads, in one-letter code: Deoxyhypusine hydroxylase (303 aa).

HEAT-like PBS-type repeat units lie at residues 56–82 and 89–115; these read LKHE…VLQD and VRHE…YAQD. Residues histidine 58, histidine 91, and glutamate 92 each contribute to the Fe cation site. The segment at 139–158 is disordered; sequence DSPDTNPYLSVDPAPPAEEK. 3 HEAT-like PBS-type repeats span residues 176-202, 207-233, and 240-266; these read HRYR…GLQI, FRHE…ALER, and VRHE…HVGD. Fe cation-binding residues include histidine 209, histidine 242, and glutamate 243.

Belongs to the deoxyhypusine hydroxylase family. Requires Fe(2+) as cofactor.

The catalysed reaction is [eIF5A protein]-deoxyhypusine + AH2 + O2 = [eIF5A protein]-hypusine + A + H2O. Its pathway is protein modification; eIF5A hypusination. In terms of biological role, catalyzes the hydroxylation of the N(6)-(4-aminobutyl)-L-lysine intermediate produced by deoxyhypusine synthase/DHPS on a critical lysine of the eukaryotic translation initiation factor 5A/eIF-5A. This is the second step of the post-translational modification of that lysine into an unusual amino acid residue named hypusine. Hypusination is unique to mature eIF-5A factor and is essential for its function. This Xenopus laevis (African clawed frog) protein is Deoxyhypusine hydroxylase (dohh).